Here is a 190-residue protein sequence, read N- to C-terminus: Threonylcarbamoyl-AMP synthase (190 aa).

In terms of domain architecture, YrdC-like spans 7–190 (GDAIAAAIDV…ALTGELFRQG (184 aa)).

It belongs to the SUA5 family. TsaC subfamily.

The protein localises to the cytoplasm. The enzyme catalyses L-threonine + hydrogencarbonate + ATP = L-threonylcarbamoyladenylate + diphosphate + H2O. Its function is as follows. Required for the formation of a threonylcarbamoyl group on adenosine at position 37 (t(6)A37) in tRNAs that read codons beginning with adenine. Catalyzes the conversion of L-threonine, HCO(3)(-)/CO(2) and ATP to give threonylcarbamoyl-AMP (TC-AMP) as the acyladenylate intermediate, with the release of diphosphate. The chain is Threonylcarbamoyl-AMP synthase from Shigella dysenteriae serotype 1 (strain Sd197).